A 356-amino-acid polypeptide reads, in one-letter code: tRNA N6-adenosine threonylcarbamoyltransferase (356 aa).

A divalent metal cation-binding residues include His-124, His-128, and Tyr-145. Residues 145–149, Asp-177, Gly-192, Glu-196, and Asn-287 contribute to the substrate site; that span reads YVSGG. Position 315 (Asp-315) interacts with a divalent metal cation.

The protein belongs to the KAE1 / TsaD family. As to quaternary structure, component of the EKC/KEOPS complex composed of at least BUD32, CGI121, GON7, KAE1 and PCC1; the whole complex dimerizes. A divalent metal cation is required as a cofactor.

Its subcellular location is the cytoplasm. The protein resides in the nucleus. The enzyme catalyses L-threonylcarbamoyladenylate + adenosine(37) in tRNA = N(6)-L-threonylcarbamoyladenosine(37) in tRNA + AMP + H(+). In terms of biological role, component of the EKC/KEOPS complex that is required for the formation of a threonylcarbamoyl group on adenosine at position 37 (t(6)A37) in tRNAs that read codons beginning with adenine. The complex is probably involved in the transfer of the threonylcarbamoyl moiety of threonylcarbamoyl-AMP (TC-AMP) to the N6 group of A37. KAE1 likely plays a direct catalytic role in this reaction, but requires other protein(s) of the complex to fulfill this activity. The EKC/KEOPS complex also promotes both telomere uncapping and telomere elongation. The complex is required for efficient recruitment of transcriptional coactivators. This is tRNA N6-adenosine threonylcarbamoyltransferase from Yarrowia lipolytica (strain CLIB 122 / E 150) (Yeast).